We begin with the raw amino-acid sequence, 446 residues long: Tol-Pal system protein TolB (446 aa).

The N-terminal stretch at 1-36 (MMDVQTVRRGNAVQSLMSKLILPLVMAVAFALPARA) is a signal peptide. The tract at residues 424–446 (GYNERPSPTPTFASDPAWSPRIQ) is disordered.

Belongs to the TolB family. As to quaternary structure, the Tol-Pal system is composed of five core proteins: the inner membrane proteins TolA, TolQ and TolR, the periplasmic protein TolB and the outer membrane protein Pal. They form a network linking the inner and outer membranes and the peptidoglycan layer.

The protein resides in the periplasm. Functionally, part of the Tol-Pal system, which plays a role in outer membrane invagination during cell division and is important for maintaining outer membrane integrity. The polypeptide is Tol-Pal system protein TolB (Parvibaculum lavamentivorans (strain DS-1 / DSM 13023 / NCIMB 13966)).